Reading from the N-terminus, the 217-residue chain is Ribulose-phosphate 3-epimerase (217 aa).

Substrate is bound at residue serine 6. Residues histidine 29, aspartate 31, and histidine 62 each contribute to the a divalent metal cation site. Aspartate 31 serves as the catalytic Proton acceptor. Residues histidine 62, 138 to 141 (GFGG), 171 to 173 (DGG), and 193 to 194 (GS) each bind substrate. Position 171 (aspartate 171) interacts with a divalent metal cation. Residue aspartate 171 is the Proton donor of the active site.

This sequence belongs to the ribulose-phosphate 3-epimerase family. A divalent metal cation serves as cofactor.

It carries out the reaction D-ribulose 5-phosphate = D-xylulose 5-phosphate. Its pathway is carbohydrate degradation. Catalyzes the reversible epimerization of D-ribulose 5-phosphate to D-xylulose 5-phosphate. The sequence is that of Ribulose-phosphate 3-epimerase from Helicobacter pylori (strain ATCC 700392 / 26695) (Campylobacter pylori).